Here is a 647-residue protein sequence, read N- to C-terminus: Homologous recombination OB-fold protein (647 aa).

At S47 the chain carries Phosphoserine. Disordered regions lie at residues 284–361 (ARGT…GPQG), 380–399 (SRTP…RRFP), and 581–631 (SFLK…DDLD). Residues R285, R295, R329, and R337 each carry the asymmetric dimethylarginine modification. Positions 287–308 (TIQSSPQNRFPCQPFQSPSSWL) are enriched in polar residues. Low complexity predominate over residues 319-332 (TPNSSCSTPSRTSS). Polar residues predominate over residues 380 to 390 (SRTPQQPTHPS). Residues 618–631 (ASPEEELPEADDLD) are compositionally biased toward acidic residues.

As to quaternary structure, interacts with MCM8; this interaction is necessary for MCM8-MCM9 helicase complex recruitment to DNA damage sites. Interacts with RPA1; this interaction associates HROB with the RPA complex.

It localises to the nucleus. The protein resides in the chromosome. In terms of biological role, DNA-binding protein involved in homologous recombination that acts by recruiting the MCM8-MCM9 helicase complex to sites of DNA damage to promote DNA repair synthesis. This Homo sapiens (Human) protein is Homologous recombination OB-fold protein.